Here is a 246-residue protein sequence, read N- to C-terminus: Aquaporin AqpM (246 aa).

At 1–11 the chain is on the cytoplasmic side; that stretch reads MVSLTKRCIAE. A helical transmembrane segment spans residues 12–32; that stretch reads FIGTFFLVFFGAGAAAITLMI. The Extracellular segment spans residues 33 to 45; the sequence is ASGGTAPNPFNIG. The chain crosses the membrane as a helical span at residues 46-66; sequence IGLLGGLGDWVAIGLAFGFAI. Residues 67–69 lie on the Cytoplasmic side of the membrane; the sequence is AAS. Residues 70–90 traverse the membrane as a helical segment; sequence IYALGNISGCHINPAVTIGLW. The NPA 1 signature appears at 82 to 84; sequence NPA. Residues 91-103 are Extracellular-facing; it reads SVKKFPGRDVVPY. The chain crosses the membrane as a helical span at residues 104-124; the sequence is IIAQLLGAAFASFIFLQCAGI. The Cytoplasmic portion of the chain corresponds to 125-145; it reads TAATIGGLGATAPFPGIGYWQ. The chain crosses the membrane as a helical span at residues 146 to 166; the sequence is AMLAETVGTFLLMITIMGIAV. Residues 167–172 are Extracellular-facing; that stretch reads DERAPK. Residues 173–193 traverse the membrane as a helical segment; sequence GFAGIIIGLTVAGIITTIGNI. Residues 194-217 are Cytoplasmic-facing; that stretch reads TGSSLNPARTFGPYLNDMVFAGTN. Positions 199 to 201 match the NPA 2 motif; it reads NPA. Residues 218–238 form a helical membrane-spanning segment; sequence LWNYFPIYVIGPVVGAVLAAL. The Extracellular portion of the chain corresponds to 239–246; it reads TYQYLTSE.

It belongs to the MIP/aquaporin (TC 1.A.8) family. Homotetramer.

It localises to the cell membrane. Functionally, channel that permits osmotically driven movement of water in both directions. It mediates rapid entry or exit of water in response to abrupt changes in osmolarity. Also exhibits a transient but reproducible increase in the initial glycerol flux. This Methanothermobacter thermautotrophicus (strain ATCC 29096 / DSM 1053 / JCM 10044 / NBRC 100330 / Delta H) (Methanobacterium thermoautotrophicum) protein is Aquaporin AqpM (aqpM).